A 66-amino-acid polypeptide reads, in one-letter code: Large ribosomal subunit protein bL33c (66 aa).

The protein belongs to the bacterial ribosomal protein bL33 family.

The protein resides in the plastid. It is found in the chloroplast. The chain is Large ribosomal subunit protein bL33c (rpl33) from Arabidopsis thaliana (Mouse-ear cress).